The chain runs to 82 residues: MATKKAGGSSSNGRDSIGKRLGVKKFGSERVIPGDIIVRQRGTKFHPGRNVGMGSDHTIFAMKSGSVSFSVGLRGRRFVHVV.

The segment at M1–R20 is disordered.

Belongs to the bacterial ribosomal protein bL27 family.

This Neorickettsia sennetsu (strain ATCC VR-367 / Miyayama) (Ehrlichia sennetsu) protein is Large ribosomal subunit protein bL27.